The chain runs to 303 residues: Putative AraC-like transcription regulator (303 aa).

An HTH araC/xylS-type domain is found at 202–300; that stretch reads ASALTFLHRD…GMNPGDYRKH (99 aa). 2 consecutive DNA-binding regions (H-T-H motif) follow at residues 219 to 240 and 267 to 290; these read AELASAAAVSRSTLAARFKATV and LAAIAHSVGYGSESALSVAFKRVL.

In Streptomyces antibioticus, this protein is Putative AraC-like transcription regulator.